The primary structure comprises 327 residues: Phenylalanine--tRNA ligase alpha subunit (327 aa).

Glu-252 contributes to the Mg(2+) binding site.

It belongs to the class-II aminoacyl-tRNA synthetase family. Phe-tRNA synthetase alpha subunit type 1 subfamily. As to quaternary structure, tetramer of two alpha and two beta subunits. Requires Mg(2+) as cofactor.

The protein resides in the cytoplasm. The enzyme catalyses tRNA(Phe) + L-phenylalanine + ATP = L-phenylalanyl-tRNA(Phe) + AMP + diphosphate + H(+). This chain is Phenylalanine--tRNA ligase alpha subunit, found in Photorhabdus laumondii subsp. laumondii (strain DSM 15139 / CIP 105565 / TT01) (Photorhabdus luminescens subsp. laumondii).